A 128-amino-acid polypeptide reads, in one-letter code: Small ribosomal subunit protein uS14m (128 aa).

It belongs to the universal ribosomal protein uS14 family. Component of the mitochondrial ribosome small subunit (28S) which comprises a 12S rRNA and about 30 distinct proteins. Interacts with LIAT1.

It localises to the mitochondrion. The sequence is that of Small ribosomal subunit protein uS14m (Mrps14) from Mus musculus (Mouse).